The primary structure comprises 189 residues: Apolipoprotein D (189 aa).

A signal peptide spans 1 to 20 (MVMLLLLLSALAGLFGAAEG). Glutamine 21 carries the post-translational modification Pyrrolidone carboxylic acid. 2 disulfides stabilise this stretch: cysteine 28/cysteine 134 and cysteine 61/cysteine 185. 2 N-linked (GlcNAc...) asparagine glycosylation sites follow: asparagine 65 and asparagine 98.

The protein belongs to the calycin superfamily. Lipocalin family. In terms of assembly, homodimer.

Its subcellular location is the secreted. Functionally, APOD occurs in the macromolecular complex with lecithin-cholesterol acyltransferase. It is probably involved in the transport and binding of bilin. Appears to be able to transport a variety of ligands in a number of different contexts. The chain is Apolipoprotein D (APOD) from Macaca fascicularis (Crab-eating macaque).